The primary structure comprises 264 residues: Small ribosomal subunit protein uS2 (264 aa).

The protein belongs to the universal ribosomal protein uS2 family.

The chain is Small ribosomal subunit protein uS2 from Latilactobacillus sakei subsp. sakei (strain 23K) (Lactobacillus sakei subsp. sakei).